The sequence spans 287 residues: Ribonuclease Z (287 aa).

Zn(2+) is bound by residues His-64, His-66, Asp-68, His-69, His-124, Asp-191, and His-250. Asp-68 acts as the Proton acceptor in catalysis.

The protein belongs to the RNase Z family. Homodimer. Zn(2+) serves as cofactor.

The enzyme catalyses Endonucleolytic cleavage of RNA, removing extra 3' nucleotides from tRNA precursor, generating 3' termini of tRNAs. A 3'-hydroxy group is left at the tRNA terminus and a 5'-phosphoryl group is left at the trailer molecule.. Functionally, zinc phosphodiesterase, which displays some tRNA 3'-processing endonuclease activity. Probably involved in tRNA maturation, by removing a 3'-trailer from precursor tRNA. This is Ribonuclease Z from Pyrobaculum neutrophilum (strain DSM 2338 / JCM 9278 / NBRC 100436 / V24Sta) (Thermoproteus neutrophilus).